Here is a 418-residue protein sequence, read N- to C-terminus: Serine hydroxymethyltransferase (418 aa).

Residues Leu121 and 125–127 each bind (6S)-5,6,7,8-tetrahydrofolate; that span reads GHL. At Lys230 the chain carries N6-(pyridoxal phosphate)lysine. (6S)-5,6,7,8-tetrahydrofolate-binding positions include Glu246 and 355–357; that span reads SPF.

It belongs to the SHMT family. As to quaternary structure, homodimer. Requires pyridoxal 5'-phosphate as cofactor.

Its subcellular location is the cytoplasm. The catalysed reaction is (6R)-5,10-methylene-5,6,7,8-tetrahydrofolate + glycine + H2O = (6S)-5,6,7,8-tetrahydrofolate + L-serine. It functions in the pathway one-carbon metabolism; tetrahydrofolate interconversion. It participates in amino-acid biosynthesis; glycine biosynthesis; glycine from L-serine: step 1/1. Catalyzes the reversible interconversion of serine and glycine with tetrahydrofolate (THF) serving as the one-carbon carrier. This reaction serves as the major source of one-carbon groups required for the biosynthesis of purines, thymidylate, methionine, and other important biomolecules. Also exhibits THF-independent aldolase activity toward beta-hydroxyamino acids, producing glycine and aldehydes, via a retro-aldol mechanism. The sequence is that of Serine hydroxymethyltransferase from Streptococcus pneumoniae serotype 2 (strain D39 / NCTC 7466).